The following is a 211-amino-acid chain: Thymidylate kinase (211 aa).

Residue 10–17 (GVEGCGKT) coordinates ATP.

Belongs to the thymidylate kinase family.

It catalyses the reaction dTMP + ATP = dTDP + ADP. Phosphorylation of dTMP to form dTDP in both de novo and salvage pathways of dTTP synthesis. The protein is Thymidylate kinase of Nostoc sp. (strain PCC 7120 / SAG 25.82 / UTEX 2576).